Reading from the N-terminus, the 152-residue chain is MSQLCPCGSAVEYSLCCHPYVSGEKVAPDPEHLMRSRYCAFVMQDADYLIKTWHPSCGAAALRAELIAGFAHTEWLGLTVFEHCWQDGGNIGFVSFVARFTEGGKTGAIIERSRFLKENGQWYYIDGTRPQFGRNDPCPCGSGKKFKKCCGQ.

This sequence belongs to the UPF0225 family.

The chain is UPF0225 protein YchJ from Escherichia coli O127:H6 (strain E2348/69 / EPEC).